The following is a 504-amino-acid chain: Acid phosphatase A (504 aa).

Positions 1-22 (MYTLLDILKGLPLLAVAAIASA) are cleaved as a signal peptide. Residues Asn-84, Asn-112, Asn-168, Asn-260, Asn-415, Asn-450, and Asn-474 are each glycosylated (N-linked (GlcNAc...) asparagine).

The protein belongs to the metallophosphoesterase superfamily. Purple acid phosphatase family. As to quaternary structure, monomer.

It is found in the secreted. It carries out the reaction a phosphate monoester + H2O = an alcohol + phosphate. Functionally, acid phosphatase involved in the regulation of fungal phenotypic traits and virulence in C.parasitica. The sequence is that of Acid phosphatase A from Cryphonectria parasitica (strain ATCC 38755 / EP155).